Consider the following 755-residue polypeptide: ABC transporter G family member 2 (755 aa).

The ABC transporter domain occupies 98–358; that stretch reads LSFTDLTYSV…FSEFKHPIPE (261 aa). 151–158 provides a ligand contact to ATP; the sequence is GASGSGKS. Positions 449-659 constitute an ABC transmembrane type-2 domain; the sequence is IEMIVIGKRA…PYEGVLQNEF (211 aa). Transmembrane regions (helical) follow at residues 468 to 488, 503 to 523, 552 to 572, 579 to 599, 609 to 629, and 728 to 748; these read LLGMRLGAVMVTGIILATMFT, FFAFAMSTTFYTCAEAIPVFL, IPALIVLSASFAATTFWAVGL, FFFFYFTILASFWAGSSFVTF, LGFTVVVAILAYFLLFSGFFI, and LWITVAWGFFFRVLFYFTLLI.

It belongs to the ABC transporter superfamily. ABCG family. Eye pigment precursor importer (TC 3.A.1.204) subfamily.

Its subcellular location is the membrane. The sequence is that of ABC transporter G family member 2 (ABCG2) from Arabidopsis thaliana (Mouse-ear cress).